Here is a 925-residue protein sequence, read N- to C-terminus: Serine/threonine-protein kinase PLK4 (925 aa).

One can recognise a Protein kinase domain in the interval Phe-12 to Met-265. Residues Leu-18–Val-26 and Lys-41 each bind ATP. Residues Lys-45 and Lys-46 each carry the N6-acetyllysine modification. The active-site Proton acceptor is the Asp-136. Disordered regions lie at residues His-262–Met-283 and Lys-328–Ser-394. Residues Ser-330–Phe-341 show a composition bias toward low complexity. Over residues Cys-342–Asn-353 the composition is skewed to polar residues. The segment covering Arg-359–His-369 has biased composition (basic and acidic residues). The segment covering Arg-381 to Lys-391 has biased composition (polar residues). The residue at position 400 (Ser-400) is a Phosphoserine. Residues Glu-517–Glu-538 form a disordered region. A compositionally biased stretch (basic and acidic residues) spans Leu-525–Ser-536. Positions Thr-547–Lys-660 constitute a Cryptic POLO box 1 (CPB1) domain. The Cryptic POLO box 2 (CPB2) domain maps to Thr-661–Pro-774. Ser-778 is modified (phosphoserine). In terms of domain architecture, POLO box spans Gln-841 to Asn-919.

Belongs to the protein kinase superfamily. Ser/Thr protein kinase family. CDC5/Polo subfamily. Homodimer. Interacts with CEP152 (via N-terminus). Interacts with CEP78; this interaction may be important for proper PLK4 localization to the centriole and PLK4-induced overduplication of centrioles. Interacts with CEP131. Interacts simultaneously with TENT5C and CEP192. Interacts with TENT5C; this interaction leads to the TENT5C recruitment in the centrosome. Interacts with CEP85; this interaction may be important in cell migration and centriole assembly. In terms of processing, ubiquitinated; leading to its degradation by the proteasome. Deubiquitinated by USP54; leading to PLK4 stabilization. Tyrosine-phosphorylated by TEC. Post-translationally, acetylation by KAT2A and KAT2B impairs kinase activity by shifting the kinase to an inactive conformation. As to expression, expressed in tissues associated with mitotic and meiotic cell division. Highly expressed in testis.

Its subcellular location is the cytoplasm. The protein localises to the cytoskeleton. It localises to the microtubule organizing center. The protein resides in the centrosome. It is found in the centriole. Its subcellular location is the nucleus. The protein localises to the nucleolus. It localises to the cleavage furrow. The catalysed reaction is L-seryl-[protein] + ATP = O-phospho-L-seryl-[protein] + ADP + H(+). It carries out the reaction L-threonyl-[protein] + ATP = O-phospho-L-threonyl-[protein] + ADP + H(+). Its function is as follows. Serine/threonine-protein kinase that plays a central role in centriole duplication. Able to trigger procentriole formation on the surface of the parental centriole cylinder, leading to the recruitment of centriole biogenesis proteins such as SASS6, CPAP, CCP110, CEP135 and gamma-tubulin. When overexpressed, it is able to induce centrosome amplification through the simultaneous generation of multiple procentrioles adjoining each parental centriole during S phase. Phosphorylates 'Ser-151' of FBXW5 during the G1/S transition, leading to inhibit FBXW5 ability to ubiquitinate SASS6. Its central role in centriole replication suggests a possible role in tumorigenesis, centrosome aberrations being frequently observed in tumors. Phosphorylates CDC25C and CHEK2. Also involved in deuterosome-mediated centriole amplification in multiciliated that can generate more than 100 centrioles. Also involved in trophoblast differentiation by phosphorylating HAND1, leading to disrupt the interaction between HAND1 and MDFIC and activate HAND1. Required for the recruitment of STIL to the centriole and for STIL-mediated centriole amplification. Phosphorylates CEP131 at 'Ser-78' and PCM1 at 'Ser-372' which is essential for proper organization and integrity of centriolar satellites. The sequence is that of Serine/threonine-protein kinase PLK4 from Mus musculus (Mouse).